The following is a 495-amino-acid chain: BUB3-interacting and GLEBS motif-containing protein ZNF207 (495 aa).

Residues methionine 1–glutamate 92 are microtubule-binding region. 2 consecutive C2H2-type zinc fingers follow at residues proline 11 to histidine 34 and phenylalanine 35 to histidine 58. Positions glutamine 99–aspartate 111 are enriched in basic and acidic residues. Disordered regions lie at residues glutamine 99–proline 161, proline 252–glutamate 292, and valine 316–threonine 372. Over residues aspartate 112–serine 121 the composition is skewed to acidic residues. Positions phenylalanine 127–glutamine 136 are enriched in polar residues. The segment covering methionine 142 to proline 161 has biased composition (pro residues). Composition is skewed to low complexity over residues serine 283–glutamate 292 and threonine 326–threonine 372. Residues alanine 376–glutamine 408 form a GLEBS region. Residues proline 462–tyrosine 495 form a disordered region. Over residues glycine 464–methionine 484 the composition is skewed to pro residues.

Interacts (via GLEBS region) with BUB3. In terms of tissue distribution, in day-13 embryo, strongly expressed in the nervous system (brain, spinal cord and dorsal root ganglia), with strong to weak expression in other regions. Continues to be strongly expressed in the neonatal brain while expression is weak in the brain and spinal cord of adult.

It localises to the nucleus. The protein resides in the chromosome. Its subcellular location is the centromere. It is found in the kinetochore. The protein localises to the cytoplasm. It localises to the cytoskeleton. The protein resides in the spindle. Kinetochore- and microtubule-binding protein that plays a key role in spindle assembly. ZNF207/BuGZ is mainly composed of disordered low-complexity regions and undergoes phase transition or coacervation to form temperature-dependent liquid droplets. Coacervation promotes microtubule bundling and concentrates tubulin, promoting microtubule polymerization and assembly of spindle and spindle matrix by concentrating its building blocks. Also acts as a regulator of mitotic chromosome alignment by mediating the stability and kinetochore loading of BUB3. Mechanisms by which BUB3 is protected are unclear: according to a first report, ZNF207/BuGZ may act by blocking ubiquitination and proteasomal degradation of BUB3. According to another report, the stabilization is independent of the proteasome. The chain is BUB3-interacting and GLEBS motif-containing protein ZNF207 from Mus musculus (Mouse).